Consider the following 352-residue polypeptide: Ion-translocating oxidoreductase complex subunit D (352 aa).

Helical transmembrane passes span 20–40 (IMLL…WFFG), 42–62 (GTLF…AIVL), 69–91 (VASH…SIPP), and 123–143 (PAMI…TSWL). The residue at position 187 (Thr-187) is an FMN phosphoryl threonine. Transmembrane regions (helical) follow at residues 215-235 (LAGV…VFLL), 242-262 (WHIP…GWLF), 267-287 (LASP…FFIL), 301-321 (LIFG…GGYP), and 322-342 (DGVA…DYYT).

The protein belongs to the NqrB/RnfD family. The complex is composed of six subunits: RsxA, RsxB, RsxC, RsxD, RsxE and RsxG. The cofactor is FMN.

It is found in the cell inner membrane. In terms of biological role, part of a membrane-bound complex that couples electron transfer with translocation of ions across the membrane. Required to maintain the reduced state of SoxR. The sequence is that of Ion-translocating oxidoreductase complex subunit D from Salmonella paratyphi B (strain ATCC BAA-1250 / SPB7).